A 364-amino-acid polypeptide reads, in one-letter code: 3-dehydroquinate synthase (364 aa).

Residues 73–78, 107–111, 131–132, K144, K153, and 171–174 contribute to the NAD(+) site; these read DGEQNK, GVIGD, TT, and CLCT. E186, H249, and H266 together coordinate Zn(2+).

Belongs to the sugar phosphate cyclases superfamily. Dehydroquinate synthase family. The cofactor is NAD(+). Co(2+) is required as a cofactor. It depends on Zn(2+) as a cofactor.

It is found in the cytoplasm. The enzyme catalyses 7-phospho-2-dehydro-3-deoxy-D-arabino-heptonate = 3-dehydroquinate + phosphate. The protein operates within metabolic intermediate biosynthesis; chorismate biosynthesis; chorismate from D-erythrose 4-phosphate and phosphoenolpyruvate: step 2/7. Catalyzes the conversion of 3-deoxy-D-arabino-heptulosonate 7-phosphate (DAHP) to dehydroquinate (DHQ). This is 3-dehydroquinate synthase from Blochmanniella floridana.